We begin with the raw amino-acid sequence, 385 residues long: Leucine aminopeptidase 1 (385 aa).

The N-terminal stretch at 1–14 (MKFLTLALSATATA) is a signal peptide. Residues 15 to 85 (MIIVNPEQQP…YGTLHTTRVV (71 aa)) constitute a propeptide that is removed on maturation. His-185, Asp-204, Glu-243, and Asp-270 together coordinate Zn(2+). Cys-319 and Cys-323 are joined by a disulfide. His-352 serves as a coordination point for Zn(2+).

Belongs to the peptidase M28 family. M28E subfamily. In terms of assembly, monomer. Requires Zn(2+) as cofactor.

The protein resides in the secreted. Extracellular aminopeptidase that allows assimilation of proteinaceous substrates. The sequence is that of Leucine aminopeptidase 1 (lap1) from Penicillium rubens (strain ATCC 28089 / DSM 1075 / NRRL 1951 / Wisconsin 54-1255) (Penicillium chrysogenum).